The sequence spans 131 residues: Small ribosomal subunit protein bS16 (131 aa).

The segment at 87-131 (PGAEGTYRVPTANTKPPRIPGGGAAKAVEAPAEAPAEAETPASES) is disordered. Over residues 111-131 (AKAVEAPAEAPAEAETPASES) the composition is skewed to low complexity.

Belongs to the bacterial ribosomal protein bS16 family.

The chain is Small ribosomal subunit protein bS16 from Kineococcus radiotolerans (strain ATCC BAA-149 / DSM 14245 / SRS30216).